The chain runs to 317 residues: Methionyl-tRNA formyltransferase (317 aa).

112–115 (SLLP) provides a ligand contact to (6S)-5,6,7,8-tetrahydrofolate.

Belongs to the Fmt family.

The catalysed reaction is L-methionyl-tRNA(fMet) + (6R)-10-formyltetrahydrofolate = N-formyl-L-methionyl-tRNA(fMet) + (6S)-5,6,7,8-tetrahydrofolate + H(+). Functionally, attaches a formyl group to the free amino group of methionyl-tRNA(fMet). The formyl group appears to play a dual role in the initiator identity of N-formylmethionyl-tRNA by promoting its recognition by IF2 and preventing the misappropriation of this tRNA by the elongation apparatus. In Mycoplasma capricolum subsp. capricolum (strain California kid / ATCC 27343 / NCTC 10154), this protein is Methionyl-tRNA formyltransferase.